A 155-amino-acid polypeptide reads, in one-letter code: 6,7-dimethyl-8-ribityllumazine synthase (155 aa).

5-amino-6-(D-ribitylamino)uracil-binding positions include phenylalanine 24, 58 to 60 (AFE), and 82 to 84 (AII). 87–88 (AT) is a binding site for (2S)-2-hydroxy-3-oxobutyl phosphate. Histidine 90 (proton donor) is an active-site residue. Phenylalanine 115 provides a ligand contact to 5-amino-6-(D-ribitylamino)uracil. A (2S)-2-hydroxy-3-oxobutyl phosphate-binding site is contributed by arginine 129.

Belongs to the DMRL synthase family.

The enzyme catalyses (2S)-2-hydroxy-3-oxobutyl phosphate + 5-amino-6-(D-ribitylamino)uracil = 6,7-dimethyl-8-(1-D-ribityl)lumazine + phosphate + 2 H2O + H(+). Its pathway is cofactor biosynthesis; riboflavin biosynthesis; riboflavin from 2-hydroxy-3-oxobutyl phosphate and 5-amino-6-(D-ribitylamino)uracil: step 1/2. Its function is as follows. Catalyzes the formation of 6,7-dimethyl-8-ribityllumazine by condensation of 5-amino-6-(D-ribitylamino)uracil with 3,4-dihydroxy-2-butanone 4-phosphate. This is the penultimate step in the biosynthesis of riboflavin. The sequence is that of 6,7-dimethyl-8-ribityllumazine synthase from Prosthecochloris aestuarii (strain DSM 271 / SK 413).